The sequence spans 322 residues: MRILFAGTPSCAVPALNLIAREFDLCGVLTNPPAPAGRNKKMQDSDTALAVKELIKEGVLPENFPILTPQKLDDNYRKELEALKSELLVCFAYGKIFGPKTMALFPLGGINIHPSLLPRWRGPAPVPAAILAGDKLTGITIQTLAQKTDCGSILGQLEIPLNDSETTESLLADCADKCCPLLRDVLSDFENKLKQARPQEEAKALYCSMLKKEDGLIDWSKPAEEIERKIRAFTPWPGCFTFKNSEKISIIEANLYEDASNEMTKNKKFGTILGTDKKCGILIQTGNGILAVSVLQKQAKKKLEWKDFLNGSPDFLEGGFET.

115-118 (SLLP) contacts (6S)-5,6,7,8-tetrahydrofolate.

It belongs to the Fmt family.

The catalysed reaction is L-methionyl-tRNA(fMet) + (6R)-10-formyltetrahydrofolate = N-formyl-L-methionyl-tRNA(fMet) + (6S)-5,6,7,8-tetrahydrofolate + H(+). Its function is as follows. Attaches a formyl group to the free amino group of methionyl-tRNA(fMet). The formyl group appears to play a dual role in the initiator identity of N-formylmethionyl-tRNA by promoting its recognition by IF2 and preventing the misappropriation of this tRNA by the elongation apparatus. The chain is Methionyl-tRNA formyltransferase from Treponema denticola (strain ATCC 35405 / DSM 14222 / CIP 103919 / JCM 8153 / KCTC 15104).